A 338-amino-acid polypeptide reads, in one-letter code: Lipoate-protein ligase A (338 aa).

The BPL/LPL catalytic domain maps to 29 to 216 (PATQRVLFLW…AFFAHYGERV (188 aa)). Residues arginine 71, 76–79 (GAVF), and lysine 134 each bind ATP. Lysine 134 serves as a coordination point for (R)-lipoate.

It belongs to the LplA family. Monomer.

It localises to the cytoplasm. It catalyses the reaction L-lysyl-[lipoyl-carrier protein] + (R)-lipoate + ATP = N(6)-[(R)-lipoyl]-L-lysyl-[lipoyl-carrier protein] + AMP + diphosphate + H(+). Its pathway is protein modification; protein lipoylation via exogenous pathway; protein N(6)-(lipoyl)lysine from lipoate: step 1/2. The protein operates within protein modification; protein lipoylation via exogenous pathway; protein N(6)-(lipoyl)lysine from lipoate: step 2/2. Catalyzes both the ATP-dependent activation of exogenously supplied lipoate to lipoyl-AMP and the transfer of the activated lipoyl onto the lipoyl domains of lipoate-dependent enzymes. This is Lipoate-protein ligase A from Escherichia coli O1:K1 / APEC.